The primary structure comprises 94 residues: Small ribosomal subunit protein bS20 (94 aa).

It belongs to the bacterial ribosomal protein bS20 family.

Binds directly to 16S ribosomal RNA. The chain is Small ribosomal subunit protein bS20 from Symbiobacterium thermophilum (strain DSM 24528 / JCM 14929 / IAM 14863 / T).